Consider the following 327-residue polypeptide: Lipoyl synthase (327 aa).

[4Fe-4S] cluster-binding residues include C66, C71, C77, C92, C96, C99, and S306. The 218-residue stretch at 78–295 folds into the Radical SAM core domain; that stretch reads FSKGTATFMI…EKEAYELGFS (218 aa).

The protein belongs to the radical SAM superfamily. Lipoyl synthase family. Requires [4Fe-4S] cluster as cofactor.

The protein localises to the cytoplasm. It catalyses the reaction [[Fe-S] cluster scaffold protein carrying a second [4Fe-4S](2+) cluster] + N(6)-octanoyl-L-lysyl-[protein] + 2 oxidized [2Fe-2S]-[ferredoxin] + 2 S-adenosyl-L-methionine + 4 H(+) = [[Fe-S] cluster scaffold protein] + N(6)-[(R)-dihydrolipoyl]-L-lysyl-[protein] + 4 Fe(3+) + 2 hydrogen sulfide + 2 5'-deoxyadenosine + 2 L-methionine + 2 reduced [2Fe-2S]-[ferredoxin]. Its pathway is protein modification; protein lipoylation via endogenous pathway; protein N(6)-(lipoyl)lysine from octanoyl-[acyl-carrier-protein]: step 2/2. Its function is as follows. Catalyzes the radical-mediated insertion of two sulfur atoms into the C-6 and C-8 positions of the octanoyl moiety bound to the lipoyl domains of lipoate-dependent enzymes, thereby converting the octanoylated domains into lipoylated derivatives. The chain is Lipoyl synthase from Neisseria meningitidis serogroup B (strain ATCC BAA-335 / MC58).